Consider the following 177-residue polypeptide: Cell division protein ZapC (177 aa).

This sequence belongs to the ZapC family. Interacts directly with FtsZ.

The protein localises to the cytoplasm. Its function is as follows. Contributes to the efficiency of the cell division process by stabilizing the polymeric form of the cell division protein FtsZ. Acts by promoting interactions between FtsZ protofilaments and suppressing the GTPase activity of FtsZ. In Shewanella oneidensis (strain ATCC 700550 / JCM 31522 / CIP 106686 / LMG 19005 / NCIMB 14063 / MR-1), this protein is Cell division protein ZapC.